The primary structure comprises 288 residues: S-methyl-5'-thioadenosine phosphorylase (288 aa).

Phosphate contacts are provided by residues serine 10, 52-53, and 85-86; these read RH and TA. Residue methionine 188 coordinates substrate. Threonine 189 is a binding site for phosphate. 212-214 lines the substrate pocket; the sequence is DYD.

Belongs to the PNP/MTAP phosphorylase family. MTAP subfamily. Homotrimer.

The protein resides in the cytoplasm. Its subcellular location is the nucleus. The catalysed reaction is S-methyl-5'-thioadenosine + phosphate = 5-(methylsulfanyl)-alpha-D-ribose 1-phosphate + adenine. The protein operates within amino-acid biosynthesis; L-methionine biosynthesis via salvage pathway; S-methyl-5-thio-alpha-D-ribose 1-phosphate from S-methyl-5'-thioadenosine (phosphorylase route): step 1/1. In terms of biological role, catalyzes the reversible phosphorylation of S-methyl-5'-thioadenosine (MTA) to adenine and 5-methylthioribose-1-phosphate. Involved in the breakdown of MTA, a major by-product of polyamine biosynthesis. Responsible for the first step in the methionine salvage pathway after MTA has been generated from S-adenosylmethionine. Has broad substrate specificity with 6-aminopurine nucleosides as preferred substrates. The chain is S-methyl-5'-thioadenosine phosphorylase from Caenorhabditis elegans.